The primary structure comprises 196 residues: MSRRAEVTRNTSETQIRVALDLDGTGKQTLNTGVPFLDHMLDQIARHGMVDLDVSATGDTHIDDHHTVEDVGITLGQAVAKAIGDKKGIVRYGHSYVPLDEALSRVVIDFSGRPGLEFHVPFTRARVGNFDVDLSIEFFRGFVNHAGVTLHIDNLRGVNAHHQIETVFKAFGRALRMAVEIDPRAAGTIPSTKGAL.

This sequence belongs to the imidazoleglycerol-phosphate dehydratase family.

Its subcellular location is the cytoplasm. The enzyme catalyses D-erythro-1-(imidazol-4-yl)glycerol 3-phosphate = 3-(imidazol-4-yl)-2-oxopropyl phosphate + H2O. The protein operates within amino-acid biosynthesis; L-histidine biosynthesis; L-histidine from 5-phospho-alpha-D-ribose 1-diphosphate: step 6/9. This is Imidazoleglycerol-phosphate dehydratase from Ralstonia pickettii (strain 12J).